A 370-amino-acid polypeptide reads, in one-letter code: Vasopressin V2 receptor (370 aa).

Positions 1–21 (MFMASTTSAVPWHLSQPTPAG) are enriched in polar residues. Residues 1–26 (MFMASTTSAVPWHLSQPTPAGNGSEG) form a disordered region. Residues 1-38 (MFMASTTSAVPWHLSQPTPAGNGSEGELLTARDPLLAQ) lie on the Extracellular side of the membrane. An N-linked (GlcNAc...) asparagine glycan is attached at asparagine 22. A helical membrane pass occupies residues 39–63 (AELALLSTVFVAVALSNGLVLGALV). Residues 64–77 (RRGRRGRWAPMHVF) lie on the Cytoplasmic side of the membrane. A helical transmembrane segment spans residues 78-98 (IGHLCLADLAVALFQVLPQLA). The Extracellular portion of the chain corresponds to 99–113 (WDATDRFRGPDALCR). The chain crosses the membrane as a helical span at residues 114 to 135 (AVKYLQMVGMYASSYMILAMTL). The Cytoplasmic portion of the chain corresponds to 136-159 (DRHRAICRPMLAHRHGGGTHWNRP). The chain crosses the membrane as a helical span at residues 160–180 (VLLAWAFSLLFSLPQLFIFAQ). Residues 181–199 (RDVDGSGVLDCWARFAEPW) are Extracellular-facing. The helical transmembrane segment at 200 to 219 (GLRAYVTWIALMVFVAPALG) threads the bilayer. The Cytoplasmic segment spans residues 220–270 (IAACQVLIFREIHASLGPGPVPRAGGPRRGCRPGSPAEGARVSAAVAKTVK). A helical transmembrane segment spans residues 271–292 (MTLVIVIVYVLCWAPFFLVQLW). Topologically, residues 293–307 (AAWDPEAPREGPPFV) are extracellular. The chain crosses the membrane as a helical span at residues 308–327 (LLMLLASLNSCTNPWIYASF). At 328 to 370 (SSSISSELRSLLCCTWRRAPPSPGPQEESCATASSFLAKDTPS) the chain is on the cytoplasmic side. 2 S-palmitoyl cysteine lipidation sites follow: cysteine 340 and cysteine 341. A disordered region spans residues 347–370 (PPSPGPQEESCATASSFLAKDTPS).

The protein belongs to the G-protein coupled receptor 1 family. Vasopressin/oxytocin receptor subfamily. In terms of assembly, interacts with ARRDC4. Identified in a complex containing at least ARRDC4, V2R and HGS. Interacts with TMEM147.

The protein localises to the cell membrane. Its function is as follows. Receptor for arginine vasopressin. The activity of this receptor is mediated by G proteins which activate adenylate cyclase. Involved in renal water reabsorption. In Bos taurus (Bovine), this protein is Vasopressin V2 receptor (AVPR2).